The following is an 89-amino-acid chain: MALEKDEKTAIIADYQMHSTDTGSPQVQVALLTERINGLIEHLKVHPHDHHSRRGLLKLVGRRRRLLAYLASRDKEAYRKLIDTLGLRR.

Belongs to the universal ribosomal protein uS15 family. As to quaternary structure, part of the 30S ribosomal subunit. Forms a bridge to the 50S subunit in the 70S ribosome, contacting the 23S rRNA.

Functionally, one of the primary rRNA binding proteins, it binds directly to 16S rRNA where it helps nucleate assembly of the platform of the 30S subunit by binding and bridging several RNA helices of the 16S rRNA. In terms of biological role, forms an intersubunit bridge (bridge B4) with the 23S rRNA of the 50S subunit in the ribosome. The chain is Small ribosomal subunit protein uS15 from Roseiflexus sp. (strain RS-1).